Consider the following 862-residue polypeptide: DNA mismatch repair protein MutS (862 aa).

603–610 (GPNMSGKS) is an ATP binding site.

This sequence belongs to the DNA mismatch repair MutS family.

This protein is involved in the repair of mismatches in DNA. It is possible that it carries out the mismatch recognition step. This protein has a weak ATPase activity. This Bacillus velezensis (strain DSM 23117 / BGSC 10A6 / LMG 26770 / FZB42) (Bacillus amyloliquefaciens subsp. plantarum) protein is DNA mismatch repair protein MutS.